Reading from the N-terminus, the 609-residue chain is Major facilitator superfamily domain-containing protein 6-like protein A (609 aa).

2 consecutive transmembrane segments (helical) span residues 41-61 and 78-98; these read LGLG…VHLL and FFIM…AYYP. The segment at 201–241 is disordered; sequence SGKAQKVMSSKSAASNSKQRSSLNNHTSPYATHPNVSHHPS. Polar residues predominate over residues 207 to 230; it reads VMSSKSAASNSKQRSSLNNHTSPY. 9 helical membrane-spanning segments follow: residues 265–285, 307–327, 340–360, 388–408, 420–440, 452–472, 475–495, 513–535, and 541–561; these read IFLI…PLEW, LWIW…FLVD, VFFH…LSTL, IVLT…TQNF, ELYM…LYFF, WMVA…SFLW, WSVL…WWAI, LALR…GFII, and AVLY…FLLV.

The protein belongs to the major facilitator superfamily. MFSD6 family.

The protein resides in the membrane. In Xenopus laevis (African clawed frog), this protein is Major facilitator superfamily domain-containing protein 6-like protein A (mfsd6l-a).